The chain runs to 368 residues: Galactoside 2-alpha-L-fucosyltransferase SEC1 (368 aa).

The interval 1–20 is disordered; that stretch reads MWDMRAVAPQRPAAGHPRAG. At 1-31 the chain is on the cytoplasmic side; that stretch reads MWDMRAVAPQRPAAGHPRAGWPRKLKTAATR. The helical transmembrane segment at 32–52 threads the bilayer; sequence FWATCPSSSTVCFLFVIFAVS. Over 53-368 the chain is Lumenal; sequence TVFHCHRRLA…NLGQARESHP (316 aa).

This sequence belongs to the glycosyltransferase 11 family. As to expression, kidney.

It is found in the golgi apparatus. The protein resides in the golgi stack membrane. It carries out the reaction a ganglioside GM1 + GDP-beta-L-fucose = a ganglioside Fuc-GM1 + GDP + H(+). Its pathway is protein modification; protein glycosylation. Catalyzes the transfer of alpha 1,2-linked fucose to ganglioside GM1 and galacto-N-biose. This chain is Galactoside 2-alpha-L-fucosyltransferase SEC1, found in Bos taurus (Bovine).